The primary structure comprises 229 residues: LexA repressor (229 aa).

A DNA-binding region (H-T-H motif) is located at residues 28–48; the sequence is IREIGEALDIRSTNGVNDHLK. Residues serine 147 and lysine 184 each act as for autocatalytic cleavage activity in the active site.

Belongs to the peptidase S24 family. As to quaternary structure, homodimer.

The enzyme catalyses Hydrolysis of Ala-|-Gly bond in repressor LexA.. Represses a number of genes involved in the response to DNA damage (SOS response), including recA and lexA. In the presence of single-stranded DNA, RecA interacts with LexA causing an autocatalytic cleavage which disrupts the DNA-binding part of LexA, leading to derepression of the SOS regulon and eventually DNA repair. The chain is LexA repressor from Anaeromyxobacter dehalogenans (strain 2CP-C).